The sequence spans 38 residues: Large ribosomal subunit protein bL12 (38 aa).

The protein belongs to the bacterial ribosomal protein bL12 family. As to quaternary structure, homodimer. Part of the ribosomal stalk of the 50S ribosomal subunit. Forms a multimeric L10(L12)X complex, where L10 forms an elongated spine to which 2 to 4 L12 dimers bind in a sequential fashion. Binds GTP-bound translation factors.

Functionally, forms part of the ribosomal stalk which helps the ribosome interact with GTP-bound translation factors. Is thus essential for accurate translation. This is Large ribosomal subunit protein bL12 (rplL) from Salinivibrio costicola (Vibrio costicola).